A 522-amino-acid polypeptide reads, in one-letter code: Cytochrome P450 1A3 (522 aa).

Position 229 (phenylalanine 229) interacts with substrate. Cysteine 463 lines the heme pocket.

This sequence belongs to the cytochrome P450 family. Requires heme as cofactor. As to expression, liver.

The protein resides in the endoplasmic reticulum membrane. The protein localises to the microsome membrane. The enzyme catalyses an organic molecule + reduced [NADPH--hemoprotein reductase] + O2 = an alcohol + oxidized [NADPH--hemoprotein reductase] + H2O + H(+). In terms of biological role, cytochromes P450 are a group of heme-thiolate monooxygenases. They oxidize a variety of structurally unrelated compounds, including steroids, fatty acids, and xenobiotics. This chain is Cytochrome P450 1A3 (cyp1a3), found in Oncorhynchus mykiss (Rainbow trout).